A 1087-amino-acid polypeptide reads, in one-letter code: Exportin-7-B (1087 aa).

In terms of domain architecture, Importin N-terminal spans 30-96 (AEKALVEFTN…RNYVLTYLAT (67 aa)).

This sequence belongs to the exportin family.

The protein resides in the cytoplasm. The protein localises to the nucleus. In terms of biological role, mediates the nuclear export of proteins (cargos) with broad substrate specificity. In Xenopus laevis (African clawed frog), this protein is Exportin-7-B (xpo7-b).